The sequence spans 117 residues: Probable non-functional T cell receptor gamma variable (117 aa).

The N-terminal stretch at 1-20 is a signal peptide; that stretch reads MRWALAVLLAFLSPASQISS. In terms of domain architecture, Ig-like spans 21–117; that stretch reads NLEGRTKSVT…GFYYCATWDR (97 aa). Cys-41 and Cys-112 form a disulfide bridge. Asn-105 carries an N-linked (GlcNAc...) asparagine glycan.

In terms of assembly, gamma-delta TR is a heterodimer composed of a gamma and delta chain; disulfide-linked. The gamma-delta TR is associated with the transmembrane signaling CD3 coreceptor proteins following the stoichiometry: a single gamma-delta TR heterodimer associates with one CD3D-CD3E heterodimer, one CD3G-CD3E heterodimer and one CD247 homodimer forming a stable octameric structure. Upon activation, gamma-delta TR complex associates with FCER1G to initiate intracellular signaling.

The protein localises to the cell membrane. Its function is as follows. Probable non-functional open reading frame (ORF) of V region of the variable domain of T cell receptor (TR) gamma chain. Non-functional ORF generally cannot participate in the synthesis of a productive T cell receptor (TR) chain due to altered V-(D)-J or switch recombination and/or splicing site (at mRNA level) and/or conserved amino acid change (protein level). Gamma-delta TRs recognize a variety of self and foreign non-peptide antigens frequently expressed at the epithelial boundaries between the host and external environment, including endogenous lipids presented by MH-like protein CD1D and phosphoantigens presented by butyrophilin-like molecule BTN3A1. Upon antigen recognition induces rapid, innate-like immune responses involved in pathogen clearance and tissue repair. Binding of gamma-delta TR complex to antigen triggers phosphorylation of immunoreceptor tyrosine-based activation motifs (ITAMs) in the CD3 chains by the LCK and FYN kinases, allowing the recruitment, phosphorylation, and activation of ZAP70 that facilitates phosphorylation of the scaffolding proteins LCP2 and LAT. This lead to the formation of a supramolecular signalosome that recruits the phospholipase PLCG1, resulting in calcium mobilization and ERK activation, ultimately leading to T cell expansion and differentiation into effector cells. Gamma-delta TRs are produced through somatic rearrangement of a limited repertoire of variable (V), diversity (D), and joining (J) genes. The potential diversity of gamma-delta TRs is conferred by the unique ability to rearrange (D) genes in tandem and to utilize all three reading frames. The combinatorial diversity is considerably increased by the sequence exonuclease trimming and random nucleotide (N) region additions which occur during the V-(D)-J rearrangements. This is Probable non-functional T cell receptor gamma variable from Homo sapiens (Human).